The sequence spans 148 residues: Large ribosomal subunit protein bL9 (148 aa).

This sequence belongs to the bacterial ribosomal protein bL9 family.

Functionally, binds to the 23S rRNA. This is Large ribosomal subunit protein bL9 from Geobacter metallireducens (strain ATCC 53774 / DSM 7210 / GS-15).